The primary structure comprises 860 residues: DNA mismatch repair protein MutS (860 aa).

Residue 618–625 (GPNMGGKS) coordinates ATP.

It belongs to the DNA mismatch repair MutS family.

Its function is as follows. This protein is involved in the repair of mismatches in DNA. It is possible that it carries out the mismatch recognition step. This protein has a weak ATPase activity. The protein is DNA mismatch repair protein MutS of Hahella chejuensis (strain KCTC 2396).